The sequence spans 137 residues: Small ribosomal subunit protein uS9 (137 aa).

The tract at residues 104–137 (PLKSEGYLTRDPRAKERKKYGLHKARKAPQYSKR) is disordered. Positions 118–137 (KERKKYGLHKARKAPQYSKR) are enriched in basic residues.

It belongs to the universal ribosomal protein uS9 family.

This is Small ribosomal subunit protein uS9 from Gloeothece citriformis (strain PCC 7424) (Cyanothece sp. (strain PCC 7424)).